Here is a 314-residue protein sequence, read N- to C-terminus: Replication initiation protein (314 aa).

Positions 1-10 are enriched in polar residues; the sequence is MSKNNHANHS. Residues 1–25 form a disordered region; it reads MSKNNHANHSNHLENHDLDNFSKTG. Positions 11-20 are enriched in basic and acidic residues; sequence NHLENHDLDN.

The protein belongs to the plasmid replication initiation factor family.

Functionally, this protein is probably a specific topoisomerase involved in initiating replication. This protein is specifically required and may be rate-limiting for replication of the plasmid in vivo. The protein is Replication initiation protein (repN) of Staphylococcus aureus.